A 350-amino-acid polypeptide reads, in one-letter code: Phenylalanine--tRNA ligase alpha subunit (350 aa).

Mg(2+) is bound at residue glutamate 262.

Belongs to the class-II aminoacyl-tRNA synthetase family. Phe-tRNA synthetase alpha subunit type 1 subfamily. As to quaternary structure, tetramer of two alpha and two beta subunits. It depends on Mg(2+) as a cofactor.

It is found in the cytoplasm. The catalysed reaction is tRNA(Phe) + L-phenylalanine + ATP = L-phenylalanyl-tRNA(Phe) + AMP + diphosphate + H(+). This Thermus thermophilus (strain ATCC 27634 / DSM 579 / HB8) protein is Phenylalanine--tRNA ligase alpha subunit (pheS).